The sequence spans 666 residues: DNA ligase (666 aa).

Residues 31 to 35, 80 to 81, and Glu110 each bind NAD(+); these read DKEFD and SL. The N6-AMP-lysine intermediate role is filled by Lys112. NAD(+)-binding residues include Arg133, Glu170, Lys285, and Lys309. 4 residues coordinate Zn(2+): Cys404, Cys407, Cys422, and Cys428. In terms of domain architecture, BRCT spans 588–666; it reads GYTDKLAGQS…SEDEFLKLIS (79 aa).

The protein belongs to the NAD-dependent DNA ligase family. LigA subfamily. The cofactor is Mg(2+). Mn(2+) serves as cofactor.

It carries out the reaction NAD(+) + (deoxyribonucleotide)n-3'-hydroxyl + 5'-phospho-(deoxyribonucleotide)m = (deoxyribonucleotide)n+m + AMP + beta-nicotinamide D-nucleotide.. DNA ligase that catalyzes the formation of phosphodiester linkages between 5'-phosphoryl and 3'-hydroxyl groups in double-stranded DNA using NAD as a coenzyme and as the energy source for the reaction. It is essential for DNA replication and repair of damaged DNA. This is DNA ligase from Bacteroides thetaiotaomicron (strain ATCC 29148 / DSM 2079 / JCM 5827 / CCUG 10774 / NCTC 10582 / VPI-5482 / E50).